A 352-amino-acid polypeptide reads, in one-letter code: B1 bradykinin receptor (352 aa).

Residues 1 to 41 (MASWPPLELQSSNQSQLFPQNATACDNAPEAWDLLHRVLPT) are Extracellular-facing. Residues asparagine 13 and asparagine 21 are each glycosylated (N-linked (GlcNAc...) asparagine). Residues 42-62 (FIISICSFGLLGNLFVLLVFL) traverse the membrane as a helical segment. Topologically, residues 63 to 72 (LPRRRLNVAE) are cytoplasmic. Residues 73–93 (IYLANLAASDLVFVLGLPFWA) traverse the membrane as a helical segment. The Extracellular portion of the chain corresponds to 94–110 (ENIWNQFNWPFGALLCR). Cysteine 109 and cysteine 188 are disulfide-bonded. Residues 111-131 (VINGIIKANLFISIFLVVAIS) traverse the membrane as a helical segment. Residues 132 to 153 (QDRYCVLVHPMASRRRQRRRQA) are Cytoplasmic-facing. The helical transmembrane segment at 154–174 (RVTCVLIWVVGGLLSIPTFLL) threads the bilayer. Residues 175–206 (RSIQAVPDLNITACILLLPHEAWHFARIVELN) lie on the Extracellular side of the membrane. N-linked (GlcNAc...) asparagine glycosylation is present at asparagine 184. Residues 207–227 (ILAFLLPLAAIIFFNYHILAS) form a helical membrane-spanning segment. Topologically, residues 228–250 (LRGREEVSRTRCGGSKDSKTTAL) are cytoplasmic. Residues 251–271 (ILTLVVAFLVCWAPYHFFAFL) traverse the membrane as a helical segment. Topologically, residues 272-294 (EFLFQVQAVRGCFWEDFIDLGLQ) are extracellular. A helical transmembrane segment spans residues 295–315 (LANFLAFTNSSLNPVIYVFVG). Residues 316–352 (RLFRTKVWELYKQCTPKSLAPISSSHRKEIFQLFWRN) are Cytoplasmic-facing. Cysteine 329 carries S-palmitoyl cysteine lipidation.

The protein belongs to the G-protein coupled receptor 1 family. Bradykinin receptor subfamily. BDKRB1 sub-subfamily.

Its subcellular location is the cell membrane. This is a receptor for bradykinin. Could be a factor in chronic pain and inflammation. In Macaca mulatta (Rhesus macaque), this protein is B1 bradykinin receptor (BDKRB1).